The chain runs to 536 residues: Probable cytochrome P450 12a5, mitochondrial (536 aa).

Heme is bound at residue Cys482.

The protein belongs to the cytochrome P450 family. The cofactor is heme.

Its subcellular location is the mitochondrion membrane. The sequence is that of Probable cytochrome P450 12a5, mitochondrial (Cyp12a5) from Drosophila melanogaster (Fruit fly).